The following is a 447-amino-acid chain: Na(+)-translocating NADH-quinone reductase subunit A (447 aa).

It belongs to the NqrA family. Composed of six subunits; NqrA, NqrB, NqrC, NqrD, NqrE and NqrF.

The enzyme catalyses a ubiquinone + n Na(+)(in) + NADH + H(+) = a ubiquinol + n Na(+)(out) + NAD(+). Functionally, NQR complex catalyzes the reduction of ubiquinone-1 to ubiquinol by two successive reactions, coupled with the transport of Na(+) ions from the cytoplasm to the periplasm. NqrA to NqrE are probably involved in the second step, the conversion of ubisemiquinone to ubiquinol. The chain is Na(+)-translocating NADH-quinone reductase subunit A from Tolumonas auensis (strain DSM 9187 / NBRC 110442 / TA 4).